Reading from the N-terminus, the 338-residue chain is Formamidase (338 aa).

The 243-residue stretch at 15 to 257 (VVIGLAQLAL…DEIVCCELRP (243 aa)) folds into the CN hydrolase domain. Residue glutamate 61 is the Proton acceptor of the active site. Residue lysine 130 is the Proton donor of the active site. The Nucleophile role is filled by cysteine 163.

It belongs to the carbon-nitrogen hydrolase superfamily. Aliphatic amidase family.

It carries out the reaction formamide + H2O = formate + NH4(+). Functionally, is an aliphatic amidase with a restricted substrate specificity, as it only hydrolyzes formamide. This is Formamidase from Pseudomonas syringae pv. tomato (strain ATCC BAA-871 / DC3000).